Consider the following 305-residue polypeptide: MPLNLPDKLPAIELLKEENIFVIDNSRATQQDIRPLRIVILNLMPLKITTETDLVRLLSNTPLQVEISFMKIKSHTSKNTPIEHMKTFYTDFDKMREDRYDGMIITGAPVEQMEFEEVNYWDEITEIFDWARTHVTSTLYICWAAQAGLYHHYGIPKYALDKKMFGIFKHRTLLPLHPIFRGFDDEFYVPHSRHTEVRKEDILKVPELTLLSESDDSGVYMVVARGGREFFVTGHSEYSPLTLDTEYRRDVSKGLPIEIPRNYYVNDDPDKGPLVRWRGHANLLFSNWLNYFVYQETPYNIEDIR.

The active-site Acyl-thioester intermediate is the Cys-142. Substrate-binding residues include Lys-163 and Ser-192. Residue His-235 is the Proton acceptor of the active site. Residue Glu-237 is part of the active site. Arg-249 contributes to the substrate binding site.

Belongs to the MetA family.

The protein localises to the cytoplasm. It carries out the reaction L-homoserine + acetyl-CoA = O-acetyl-L-homoserine + CoA. Its pathway is amino-acid biosynthesis; L-methionine biosynthesis via de novo pathway; O-acetyl-L-homoserine from L-homoserine: step 1/1. In terms of biological role, transfers an acetyl group from acetyl-CoA to L-homoserine, forming acetyl-L-homoserine. The protein is Homoserine O-acetyltransferase of Bacteroides fragilis (strain ATCC 25285 / DSM 2151 / CCUG 4856 / JCM 11019 / LMG 10263 / NCTC 9343 / Onslow / VPI 2553 / EN-2).